Consider the following 1250-residue polypeptide: TBC1 domain family member 9B (1250 aa).

GRAM domains lie at leucine 142–alanine 209 and glutamate 288–aspartate 356. Phosphothreonine is present on threonine 397. The interval threonine 397–phenylalanine 443 is disordered. 4 positions are modified to phosphoserine: serine 411, serine 432, serine 435, and serine 463. A compositionally biased stretch (polar residues) spans aspartate 414 to phenylalanine 443. Positions glycine 508–glycine 695 constitute a Rab-GAP TBC domain. The helical transmembrane segment at leucine 668 to valine 688 threads the bilayer. The region spanning histidine 879–glycine 914 is the EF-hand domain. Disordered stretches follow at residues leucine 974–arginine 999, serine 1069–glutamine 1093, and valine 1128–tyrosine 1157. Residues serine 984–arginine 999 show a composition bias toward basic and acidic residues. Position 1241 is a phosphoserine (serine 1241).

Its subcellular location is the membrane. May act as a GTPase-activating protein for Rab family protein(s). The polypeptide is TBC1 domain family member 9B (TBC1D9B) (Homo sapiens (Human)).